Consider the following 905-residue polypeptide: MADLEAGMVAAATDQGNSTRSQDDAATLIPNSGNLGSSNRSTKTARFKDDDELVEITLDVQRDSVAIQEVRGVDEGGSGHGTGFDGLPLVSPSSKSGKLTSKLRQVTNGLKMKSSSRKAPSPQAQQSAKRVRKRLDRTKSSAAVALKGLQFVTAKVGNDGWAAVEKRFNQLQVDGVLLRSRFGKCIGMDGSDEFAVQMFDSLARKRGIVKQVLTKDELKDFYEQLTDQGFDNRLRTFFDMVDKNADGRLTAEEVKEIIALSASANKLSKIKERADEYTALIMEELDPTNLGYIEMEDLEALLLQSPSEAAARSTTTHSSKLSKALSMKLASNKEMSPVRHYWQQFMYFLEENWKRSWVMTLWISICIALFIWKFIQYRNRAVFGIMGYCVTTAKGAAETLKFNMALVLLPVCRNTITWIRSKTQVGAVVPFNDNINFHKVIAAGVAVGVALHAGAHLTCDFPRLLHASDAQYELMKPFFGEKRPPNYWWFVKGTEGWTGVVMVVLMAIAFTLAQPWFRRNKLKDSNPLKKMTGFNAFWFTHHLFVIVYTLLFVHGTCLYLSRKWYKKTTWMYLAVPVVLYVSERILRLFRSHDAVGIQKVAVYPGNVLALYMSKPPGFRYRSGQYIFIKCTAVSPYEWHPFSITSAPGDDYLSVHIRTRGDWTSRLRTVFSEACRPPTEGESGLLRADLSKGITDEKARFPKLLVDGPYGAPAQDYREYDVLLLIGLGIGATPLISIVKDVLNHIQGEGSVGTTEPESSSKAKKKPFMTKRAYFYWVTREEGSFEWFRGVMNEVSEKDKDGVIELHNHCSSVYQEGDARSALIVMLQELQHAKKGVDILSGTSVKTHFARPNWRSVFKKVAVSHENQRVGVFYCGEPVLVPQLRQLSADFTHKTNTRFDFHKENF.

Disordered stretches follow at residues 1 to 46 (MADL…KTAR) and 69 to 134 (EVRG…VRKR). The Cytoplasmic segment spans residues 1-355 (MADLEAGMVA…MYFLEENWKR (355 aa)). Positions 29-44 (IPNSGNLGSSNRSTKT) are enriched in polar residues. A compositionally biased stretch (gly residues) spans 75 to 84 (EGGSGHGTGF). Polar residues predominate over residues 91-108 (SPSSKSGKLTSKLRQVTN). EF-hand-like stretches follow at residues 172–180 (QVDGVLLRS) and 206–217 (RGIVKQVLTKDE). EF-hand domains follow at residues 229–264 (GFDN…SASA) and 273–308 (RADE…SPSE). Ca(2+) contacts are provided by Asp-242, Asn-244, Asp-246, Arg-248, and Glu-253. Residues 356–376 (SWVMTLWISICIALFIWKFIQ) form a helical membrane-spanning segment. Residues 377 to 440 (YRNRAVFGIM…FNDNINFHKV (64 aa)) lie on the Extracellular side of the membrane. The Ferric oxidoreductase domain occupies 395 to 551 (GAAETLKFNM…HLFVIVYTLL (157 aa)). The helical transmembrane segment at 441-461 (IAAGVAVGVALHAGAHLTCDF) threads the bilayer. Over 462–496 (PRLLHASDAQYELMKPFFGEKRPPNYWWFVKGTEG) the chain is Cytoplasmic. A helical membrane pass occupies residues 497–517 (WTGVVMVVLMAIAFTLAQPWF). The Extracellular segment spans residues 518 to 539 (RRNKLKDSNPLKKMTGFNAFWF). The helical transmembrane segment at 540–560 (THHLFVIVYTLLFVHGTCLYL) threads the bilayer. The Cytoplasmic segment spans residues 561-568 (SRKWYKKT). Residues 569–586 (TWMYLAVPVVLYVSERIL) form a helical membrane-spanning segment. Residues 587 to 715 (RLFRSHDAVG…DGPYGAPAQD (129 aa)) form the FAD-binding FR-type domain. The Extracellular portion of the chain corresponds to 587-717 (RLFRSHDAVG…PYGAPAQDYR (131 aa)). The chain crosses the membrane as a helical span at residues 718–738 (EYDVLLLIGLGIGATPLISIV). Residues 739 to 905 (KDVLNHIQGE…TRFDFHKENF (167 aa)) are Cytoplasmic-facing.

It belongs to the RBOH (TC 5.B.1.3) family. Monomer and homodimer, stabilized by swapping the EF-hand motifs. Interacts with GTP-bound RAC1.

The protein resides in the membrane. Calcium-dependent NADPH oxidase that generates superoxide. In Oryza sativa subsp. japonica (Rice), this protein is Respiratory burst oxidase homolog protein B (RBOHB).